A 37-amino-acid polypeptide reads, in one-letter code: Large ribosomal subunit protein bL36 (37 aa).

This sequence belongs to the bacterial ribosomal protein bL36 family.

The protein is Large ribosomal subunit protein bL36 of Leptothrix cholodnii (strain ATCC 51168 / LMG 8142 / SP-6) (Leptothrix discophora (strain SP-6)).